The primary structure comprises 88 residues: Small ribosomal subunit protein bS18B (88 aa).

Belongs to the bacterial ribosomal protein bS18 family. Part of the 30S ribosomal subunit. Forms a tight heterodimer with protein bS6.

Binds as a heterodimer with protein bS6 to the central domain of the 16S rRNA, where it helps stabilize the platform of the 30S subunit. This is Small ribosomal subunit protein bS18B from Roseiflexus castenholzii (strain DSM 13941 / HLO8).